A 264-amino-acid polypeptide reads, in one-letter code: Acyl-[acyl-carrier-protein]--UDP-N-acetylglucosamine O-acyltransferase (264 aa).

This sequence belongs to the transferase hexapeptide repeat family. LpxA subfamily. Homotrimer.

Its subcellular location is the cytoplasm. The catalysed reaction is a (3R)-hydroxyacyl-[ACP] + UDP-N-acetyl-alpha-D-glucosamine = a UDP-3-O-[(3R)-3-hydroxyacyl]-N-acetyl-alpha-D-glucosamine + holo-[ACP]. The protein operates within glycolipid biosynthesis; lipid IV(A) biosynthesis; lipid IV(A) from (3R)-3-hydroxytetradecanoyl-[acyl-carrier-protein] and UDP-N-acetyl-alpha-D-glucosamine: step 1/6. Functionally, involved in the biosynthesis of lipid A, a phosphorylated glycolipid that anchors the lipopolysaccharide to the outer membrane of the cell. The sequence is that of Acyl-[acyl-carrier-protein]--UDP-N-acetylglucosamine O-acyltransferase from Rickettsia rickettsii.